Here is a 217-residue protein sequence, read N- to C-terminus: Probable transaldolase (217 aa).

The active-site Schiff-base intermediate with substrate is K83.

Belongs to the transaldolase family. Type 3B subfamily.

It localises to the cytoplasm. The enzyme catalyses D-sedoheptulose 7-phosphate + D-glyceraldehyde 3-phosphate = D-erythrose 4-phosphate + beta-D-fructose 6-phosphate. It participates in carbohydrate degradation; pentose phosphate pathway; D-glyceraldehyde 3-phosphate and beta-D-fructose 6-phosphate from D-ribose 5-phosphate and D-xylulose 5-phosphate (non-oxidative stage): step 2/3. Functionally, transaldolase is important for the balance of metabolites in the pentose-phosphate pathway. In Ruegeria sp. (strain TM1040) (Silicibacter sp.), this protein is Probable transaldolase.